A 281-amino-acid polypeptide reads, in one-letter code: Very long chain fatty acid elongase 7 (281 aa).

Ala-2 carries the N-acetylalanine modification. At 2–27 the chain is on the lumenal side; it reads AFSDLTSRTVHLYDNWIKDADPRVED. Residues 28 to 48 form a helical membrane-spanning segment; that stretch reads WLLMSSPLPQTILLGFYVYFV. Over 49–72 the chain is Cytoplasmic; that stretch reads TSLGPKLMENRKPFELKKAMITYN. The chain crosses the membrane as a helical span at residues 73 to 93; it reads FFIVLFSVYMCYEFVMSGWGI. The Lumenal segment spans residues 94–115; the sequence is GYSFRCDIVDYSRSPTALRMAR. The cysteines at positions 99 and 231 are disulfide-linked. The helical transmembrane segment at 116–136 threads the bilayer; it reads TCWLYYFSKFIELLDTIFFVL. 3-oxoeicosanoyl-CoA-binding residues include Lys-124, Arg-137, Lys-139, Gln-142, and His-147. The Cytoplasmic segment spans residues 137–142; it reads RKKNSQ. Residues 143–162 traverse the membrane as a helical segment; it reads VTFLHVFHHTIMPWTWWFGV. Residues 147 to 151 carry the HxxHH motif motif; that stretch reads HVFHH. The active-site Nucleophile is the His-150. The Lumenal segment spans residues 163-171; the sequence is KFAAGGLGT. Residues 172–194 form a helical membrane-spanning segment; it reads FHALLNTAVHVVMYSYYGLSALG. 3-oxoeicosanoyl-CoA is bound by residues Tyr-187, Lys-204, Thr-208, and Gln-211. At 195-206 the chain is on the cytoplasmic side; that stretch reads PAYQKYLWWKKY. A helical membrane pass occupies residues 207 to 227; sequence LTSLQLVQFVIVAIHISQFFF. Topologically, residues 228–236 are lumenal; the sequence is MEDCKYQFP. Residues 237 to 257 form a helical membrane-spanning segment; it reads VFACIIMSYSFMFLLLFLHFW. Over 258 to 281 the chain is Cytoplasmic; that stretch reads YRAYTKGQRLPKTVKNGTCKNKDN. Arg-266 contributes to the 3-oxoeicosanoyl-CoA binding site. The Di-lysine motif signature appears at 277-281; sequence KNKDN.

It belongs to the ELO family. ELOVL7 subfamily. Homodimer. Interacts with TECR. As to expression, expressed in most tissues except heart and skeletal muscle.

It is found in the endoplasmic reticulum membrane. It carries out the reaction a very-long-chain acyl-CoA + malonyl-CoA + H(+) = a very-long-chain 3-oxoacyl-CoA + CO2 + CoA. It catalyses the reaction eicosanoyl-CoA + malonyl-CoA + H(+) = 3-oxodocosanoyl-CoA + CO2 + CoA. The catalysed reaction is (5Z,8Z,11Z,14Z)-eicosatetraenoyl-CoA + malonyl-CoA + H(+) = (7Z,10Z,13Z,16Z)-3-oxodocosatetraenoyl-CoA + CO2 + CoA. The enzyme catalyses (6Z,9Z,12Z)-octadecatrienoyl-CoA + malonyl-CoA + H(+) = (8Z,11Z,14Z)-3-oxoeicosatrienoyl-CoA + CO2 + CoA. It carries out the reaction (9Z,12Z)-octadecadienoyl-CoA + malonyl-CoA + H(+) = (11Z,14Z)-3-oxoicosa-11,14-dienoyl-CoA + CO2 + CoA. It catalyses the reaction (9Z)-octadecenoyl-CoA + malonyl-CoA + H(+) = 3-oxo-(11Z)-eicosenoyl-CoA + CO2 + CoA. The catalysed reaction is octadecanoyl-CoA + malonyl-CoA + H(+) = 3-oxoeicosanoyl-CoA + CO2 + CoA. The enzyme catalyses hexadecanoyl-CoA + malonyl-CoA + H(+) = 3-oxooctadecanoyl-CoA + CO2 + CoA. It carries out the reaction (9Z,12Z,15Z)-octadecatrienoyl-CoA + malonyl-CoA + H(+) = (11Z,14Z,17Z)-3-oxoeicosatrienoyl-CoA + CO2 + CoA. Its pathway is lipid metabolism; fatty acid biosynthesis. In terms of biological role, catalyzes the first and rate-limiting reaction of the four reactions that constitute the long-chain fatty acids elongation cycle. This endoplasmic reticulum-bound enzymatic process allows the addition of 2 carbons to the chain of long- and very long-chain fatty acids (VLCFAs) per cycle. Condensing enzyme with higher activity toward C18 acyl-CoAs, especially C18:3(n-3) acyl-CoAs and C18:3(n-6)-CoAs. Also active toward C20:4-, C18:0-, C18:1-, C18:2- and C16:0-CoAs, and weakly toward C20:0-CoA. Little or no activity toward C22:0-, C24:0-, or C26:0-CoAs. May participate in the production of saturated and polyunsaturated VLCFAs of different chain lengths that are involved in multiple biological processes as precursors of membrane lipids and lipid mediators. In Homo sapiens (Human), this protein is Very long chain fatty acid elongase 7.